A 270-amino-acid polypeptide reads, in one-letter code: Extracellular metalloprotease MCYG_04966 (270 aa).

The signal sequence occupies residues 1–19 (MRLSLFLSGLAAAGSIVSA). N-linked (GlcNAc...) asparagine glycosylation is present at asparagine 135. Residue histidine 184 coordinates Zn(2+). Glutamate 185 is a catalytic residue. Histidine 188 is a Zn(2+) binding site. N-linked (GlcNAc...) asparagine glycosylation is present at asparagine 199. Positions 208–227 (VADTPPQSKKTSGCPNSQDS) are disordered. Positions 212–227 (PPQSKKTSGCPNSQDS) are enriched in polar residues. Cysteine 221 and cysteine 247 are joined by a disulfide.

The protein belongs to the peptidase M43B family.

The protein localises to the secreted. Its function is as follows. Secreted metalloproteinase that allows assimilation of proteinaceous substrates. Plays a pivotal role as a pathogenicity determinant during infections and contributes to the ability of the pathogen to persist within the mammalian host. The protein is Extracellular metalloprotease MCYG_04966 of Arthroderma otae (strain ATCC MYA-4605 / CBS 113480) (Microsporum canis).